A 602-amino-acid chain; its full sequence is Aspartate--tRNA(Asp/Asn) ligase (602 aa).

E177 contributes to the L-aspartate binding site. An aspartate region spans residues 201-204 (QLFK). R223 lines the L-aspartate pocket. ATP contacts are provided by residues 223-225 (RDE) and Q232. H460 contacts L-aspartate. An ATP-binding site is contributed by E497. R504 contacts L-aspartate. 549–552 (GLDR) is a binding site for ATP.

The protein belongs to the class-II aminoacyl-tRNA synthetase family. Type 1 subfamily. In terms of assembly, homodimer.

It localises to the cytoplasm. It carries out the reaction tRNA(Asx) + L-aspartate + ATP = L-aspartyl-tRNA(Asx) + AMP + diphosphate. Aspartyl-tRNA synthetase with relaxed tRNA specificity since it is able to aspartylate not only its cognate tRNA(Asp) but also tRNA(Asn). Reaction proceeds in two steps: L-aspartate is first activated by ATP to form Asp-AMP and then transferred to the acceptor end of tRNA(Asp/Asn). This Prochlorococcus marinus (strain MIT 9515) protein is Aspartate--tRNA(Asp/Asn) ligase.